Reading from the N-terminus, the 290-residue chain is F-box protein PP2-A13 (290 aa).

One can recognise an F-box domain in the interval 21-67 (RKLRLVDLPENCVALIMTRLDPPEICRLARLNRMFRRASSADFIWES).

In terms of assembly, part of a SCF (ASK-cullin-F-box) protein ligase complex. Interacts with SKP1A/ASK1, SKP1B/ASK2, ASK5, ASK11 and ASK13.

The protein localises to the nucleus. Its pathway is protein modification; protein ubiquitination. Functionally, component of SCF(ASK-cullin-F-box) E3 ubiquitin ligase complexes, which may mediate the ubiquitination and subsequent proteasomal degradation of target proteins. The sequence is that of F-box protein PP2-A13 (PP2A13) from Arabidopsis thaliana (Mouse-ear cress).